The sequence spans 279 residues: Stathmin domain-containing protein 1 (279 aa).

Disordered regions lie at residues 1 to 110 and 178 to 254; these read MGCG…ERPK and AAEE…VAQM. Glycine 2 carries the N-myristoyl glycine lipid modification. The span at 22-32 shows a compositional bias: basic and acidic residues; it reads KGWEEGSKADV. The span at 34 to 45 shows a compositional bias: polar residues; it reads VTSSKENCSPQT. In terms of domain architecture, SLD spans 121-248; sequence QGIIQSRSKV…GEPLKRKKSE (128 aa). 2 stretches are compositionally biased toward basic and acidic residues: residues 178-191 and 232-242; these read AAEE…EEIR and EKSDVQEGEPL.

This Mus musculus (Mouse) protein is Stathmin domain-containing protein 1 (Stmnd1).